Here is a 333-residue protein sequence, read N- to C-terminus: Isopenicillin N synthase (333 aa).

3 residues coordinate isopenicillin N: arginine 87, tyrosine 91, and tyrosine 191. N-[(5S)-5-amino-5-carboxypentanoyl]-L-cysteinyl-D-valine-binding residues include arginine 87, tyrosine 91, tyrosine 191, histidine 216, and aspartate 218. The Fe2OG dioxygenase domain occupies 180 to 290 (DTLSCRSLMI…RLSLPFFLHA (111 aa)). 3 residues coordinate Fe(2+): histidine 216, aspartate 218, and histidine 272. Arginine 281 contributes to the 2-oxoglutarate binding site. Serine 283 serves as a coordination point for isopenicillin N. Residue serine 283 coordinates N-[(5S)-5-amino-5-carboxypentanoyl]-L-cysteinyl-D-valine.

Belongs to the iron/ascorbate-dependent oxidoreductase family. Fe cation serves as cofactor. L-ascorbate is required as a cofactor.

It carries out the reaction N-[(5S)-5-amino-5-carboxypentanoyl]-L-cysteinyl-D-valine + O2 = isopenicillin N + 2 H2O. It functions in the pathway antibiotic biosynthesis; penicillin G biosynthesis; penicillin G from L-alpha-aminoadipate and L-cysteine and L-valine: step 2/3. Its function is as follows. Removes, in the presence of oxygen, 4 hydrogen atoms from delta-L-(alpha-aminoadipyl)-L-cysteinyl-D-valine (ACV) to form the azetidinone and thiazolidine rings of isopenicillin. The polypeptide is Isopenicillin N synthase (pcbC) (Streptomyces microflavus (Streptomyces lipmanii)).